Reading from the N-terminus, the 380-residue chain is SAM and SH3 domain-containing protein 3 (380 aa).

Positions 1-76 are disordered; that stretch reads MLRRKPSNAS…KSGKKLGKKW (76 aa). Low complexity predominate over residues 22 to 41; it reads LQRSSSFKDFAKSKPSSPVV. Ser27, Ser34, and Ser42 each carry phosphoserine. The residue at position 61 (Thr61) is a Phosphothreonine. Ser97 bears the Phosphoserine mark. Disordered stretches follow at residues 98–174, 237–256, and 318–380; these read EEMA…TGPF, VGHARPSRRQSKGKRPKPKT, and TGSE…AGAP. Thr103 is subject to Phosphothreonine. Ser110 is modified (phosphoserine). A Phosphothreonine modification is found at Thr112. Ser113 is subject to Phosphoserine. Position 116 is a phosphotyrosine (Tyr116). Residue Ser120 is modified to Phosphoserine. Positions 143–152 are enriched in polar residues; sequence RQASTGSELC. Low complexity predominate over residues 153–164; that stretch reads SPSPGSGSFGEE. The SH3 domain maps to 173–234; it reads PFCGRARVHT…KFIYVDVLPE (62 aa). The span at 241–255 shows a compositional bias: basic residues; that stretch reads RPSRRQSKGKRPKPK. The region spanning 252-316 is the SAM domain; sequence PKPKTLHELL…LTAAELLLDY (65 aa). Residue Thr318 is modified to Phosphothreonine. Over residues 318–327 the composition is skewed to acidic residues; it reads TGSEEAEEGA. Position 320 is a phosphoserine (Ser320).

In terms of biological role, may function as a signaling adapter protein in lymphocytes. The chain is SAM and SH3 domain-containing protein 3 (SASH3) from Homo sapiens (Human).